The sequence spans 286 residues: Oxidase hkm6 (286 aa).

3 residues coordinate Cu cation: H16, H25, and H215.

It belongs to the tyrosinase family. The cofactor is Cu(2+).

It participates in secondary metabolite biosynthesis. In terms of biological role, oxidase; part of the gene cluster that mediates the biosynthesis of hancockiamides, an unusual new family of N-cinnamoylated piperazines. The NRPS hkm10 and the NmrA-like reductase hkm9 are proposed to convert two molecules of L-Phe to the intermediary piperazine called xenocockiamide A. Xenocockiamide A is then converted to hancockiamide D via a series of hydroxylations and O-methylations. The tyrosinase hkm6 may catalyze an aromatic hydroxylation, then the 2-oxoglutarate-dependent Fe(II) dioxygenase hkm4 and the FAD-dependent phenol hydroxylase hkm7 may catalyze consecutive hydroxylations to install 2 more hydroxy groups, and the methyltransferase hkm8 probably catalyzes two methylations using 2 molecules of S-adenosyl-L-methionine (SAM). The NRPS hkm11 activates and transfers trans-cinnamate supplied by the PAL hkm12 to hancockiamide D and produces hancockiamide A. NRPS Hkm11 has the flexibility to tolerate the bulky hancockiamide G as a substrate and the absence of the acetyl-transferase hkm3 opens up the opportunity for hkm11 to introduce a second N-cinnamoyl moiety. The cytochrome P450 monooxygenase hkm5 catalyzes the methylenedioxy bridge formation, converting hancockiamide A into hancockiamide G. Hkm5 can also convert hancockiamide B into hancockiamide C, and hancockiamide D into hancockiamide H. The N-acetyltransferase hkm3 finally transfers an acetyl group to 1-N of piperazine, converting hancockiamide A into hancockiamide B and hancockiamide G into hancockiamide C. The polypeptide is Oxidase hkm6 (Aspergillus hancockii).